The sequence spans 355 residues: Isopentenyl-diphosphate delta-isomerase (355 aa).

9–10 (RK) contributes to the substrate binding site. FMN is bound by residues 67 to 69 (AIT), Ser97, and Asn125. 97-99 (SQR) contributes to the substrate binding site. Gln161 contacts substrate. Glu162 serves as a coordination point for Mg(2+). FMN contacts are provided by residues Lys197, Thr227, 276–278 (GIR), and 297–298 (AL).

Belongs to the IPP isomerase type 2 family. Homooctamer. Dimer of tetramers. It depends on FMN as a cofactor. NADPH is required as a cofactor. Mg(2+) serves as cofactor.

It localises to the cytoplasm. The catalysed reaction is isopentenyl diphosphate = dimethylallyl diphosphate. In terms of biological role, involved in the biosynthesis of isoprenoids. Catalyzes the 1,3-allylic rearrangement of the homoallylic substrate isopentenyl (IPP) to its allylic isomer, dimethylallyl diphosphate (DMAPP). The chain is Isopentenyl-diphosphate delta-isomerase from Methanococcus maripaludis (strain DSM 14266 / JCM 13030 / NBRC 101832 / S2 / LL).